A 336-amino-acid polypeptide reads, in one-letter code: Inactive serine/threonine-protein kinase BKN2 (336 aa).

The interval 1-25 (MGNCLKPLKEQPPSASPKPLTIPSS) is disordered. G2 carries N-myristoyl glycine lipidation. A lipid anchor (S-palmitoyl cysteine) is attached at C4. Residues 52–332 (YMVIKGNDNG…QVFDGLNDIA (281 aa)) enclose the Protein kinase domain.

The protein belongs to the protein kinase superfamily. Ser/Thr protein kinase family. In terms of assembly, component of an immune signaling complex made of, at least, SZE1, BKN2/SZE2, ZAR1 and ZED1. Interacts directly with ZAR1 and Pseudomonas syringae HOPZ1A at the plasma membrane. N-terminal myristoylation is critical for plasma membrane localization and implication in defense responses. As to expression, expressed in stigma and ovaries in flowers, and in stems and seedlings.

Its subcellular location is the cell membrane. Together with SZE1 and ZED1, required for effector-triggered immunity (e.g. Pseudomonas syringae type III effector HopZ1a) via the activation of ZAR1, thus being essential for resistance against P. syringae pv. tomato DC3000 expressing HopZ1a. Collaboratively with BKN1, involved in compatible pollen-stigma interactions. The chain is Inactive serine/threonine-protein kinase BKN2 from Arabidopsis thaliana (Mouse-ear cress).